A 415-amino-acid polypeptide reads, in one-letter code: Tyrosine--tRNA ligase (415 aa).

Positions Pro54–His63 match the 'HIGH' region motif. A 'KMSKS' region motif is present at residues Lys248 to Ser252. Lys251 contributes to the ATP binding site. The 65-residue stretch at Ala351–Arg415 folds into the S4 RNA-binding domain.

Belongs to the class-I aminoacyl-tRNA synthetase family. TyrS type 2 subfamily. Homodimer.

Its subcellular location is the cytoplasm. It catalyses the reaction tRNA(Tyr) + L-tyrosine + ATP = L-tyrosyl-tRNA(Tyr) + AMP + diphosphate + H(+). Functionally, catalyzes the attachment of tyrosine to tRNA(Tyr) in a two-step reaction: tyrosine is first activated by ATP to form Tyr-AMP and then transferred to the acceptor end of tRNA(Tyr). This Prochlorococcus marinus (strain MIT 9313) protein is Tyrosine--tRNA ligase.